Here is a 74-residue protein sequence, read N- to C-terminus: MWTRHRDASWWLMKINLLRGYLLSATQHGNKPPSRHEAESLKRRAHHSPYTCTLTTLTFPENNPLIQTVHGKSV.

The segment at 26–45 is disordered; that stretch reads TQHGNKPPSRHEAESLKRRA.

This Escherichia coli protein is Protein sok (sok).